The following is a 397-amino-acid chain: Serpin B10 (397 aa).

Residues 62–85 (RDQGVKSSPESEKKRKMEFNSSNS) form a disordered region. Over residues 70-79 (PESEKKRKME) the composition is skewed to basic and acidic residues. The short motif at 74-77 (KKRK) is the Nuclear localization signal element.

It belongs to the serpin family. Ov-serpin subfamily.

The protein localises to the nucleus. Its subcellular location is the cytoplasm. Its function is as follows. Protease inhibitor that may play a role in the regulation of protease activities during hematopoiesis and apoptosis induced by TNF. May regulate protease activities in the cytoplasm and in the nucleus. This Papio anubis (Olive baboon) protein is Serpin B10 (SERPINB10).